A 123-amino-acid polypeptide reads, in one-letter code: MSIETLVEEIGGLTLTDAAALVKALEEKFGVSAAPAMVAGVAAAAPAAAAAEEQTEFDVVLTAAGDSKINVIKVVRAITGLGLKEAKDLVDGAPKAVKEAVSKEDAEKIVKELKDAGASVELK.

Belongs to the bacterial ribosomal protein bL12 family. Homodimer. Part of the ribosomal stalk of the 50S ribosomal subunit. Forms a multimeric L10(L12)X complex, where L10 forms an elongated spine to which 2 to 4 L12 dimers bind in a sequential fashion. Binds GTP-bound translation factors.

Forms part of the ribosomal stalk which helps the ribosome interact with GTP-bound translation factors. Is thus essential for accurate translation. This is Large ribosomal subunit protein bL12 from Chlorobium phaeovibrioides (strain DSM 265 / 1930) (Prosthecochloris vibrioformis (strain DSM 265)).